Here is a 207-residue protein sequence, read N- to C-terminus: uncharacterized protein (207 aa).

2 disordered regions span residues 1-81 (MNPT…GNTR) and 140-169 (TSQS…PPKK). Over residues 21–40 (FEQTNSSASLTQKNSSSETE) the composition is skewed to polar residues. A compositionally biased stretch (basic residues) spans 58–70 (PTKRGSGRGRGRS). Positions 140-152 (TSQSIDAQPTPSQ) are enriched in polar residues. Basic and acidic residues predominate over residues 156 to 165 (AHHEPHEKRG).

It localises to the nucleus. Its subcellular location is the nucleolus. This is an uncharacterized protein from Schizosaccharomyces pombe (strain 972 / ATCC 24843) (Fission yeast).